The chain runs to 37 residues: Glucagon-1 (37 aa).

This sequence belongs to the glucagon family.

Its subcellular location is the secreted. In terms of biological role, glucagon plays a key role in glucose metabolism and homeostasis. Regulates blood glucose by increasing gluconeogenesis and decreasing glycolysis. This is Glucagon-1 from Huso dauricus (Kaluga sturgeon).